We begin with the raw amino-acid sequence, 118 residues long: Large ribosomal subunit protein bL20 (118 aa).

The protein belongs to the bacterial ribosomal protein bL20 family.

In terms of biological role, binds directly to 23S ribosomal RNA and is necessary for the in vitro assembly process of the 50S ribosomal subunit. It is not involved in the protein synthesizing functions of that subunit. This Thermus thermophilus (strain ATCC BAA-163 / DSM 7039 / HB27) protein is Large ribosomal subunit protein bL20.